The sequence spans 255 residues: MSNITMKELLEAGVHFGHQTKRWNPKMKPYIFGARNGIYIIDLQKTVRLFKNAYSFVTDAAQAGETVLFVGTKKQAQDSVAEEAQRCGQFYVNDRWLGGMLTNFATVKQSIDRLKRLDAMIADGTIEAYTKKEQLKLAKEREKLEKTLGGIKGMGKVPGVLFVVDPKNEEIAVSEAKKLGIPVVAIVDTNCDPDDINYVIPGNDDAIRAIRLLTSKMADAVLEGGQARNARLQTGAEEEFSTEGEEVVEETPAEA.

The interval 231-255 (RLQTGAEEEFSTEGEEVVEETPAEA) is disordered. Residues 236–255 (AEEEFSTEGEEVVEETPAEA) are compositionally biased toward acidic residues.

The protein belongs to the universal ribosomal protein uS2 family.

This chain is Small ribosomal subunit protein uS2, found in Citrifermentans bemidjiense (strain ATCC BAA-1014 / DSM 16622 / JCM 12645 / Bem) (Geobacter bemidjiensis).